Consider the following 820-residue polypeptide: Trimethylamine-N-oxide reductase (820 aa).

Positions 1 to 33 (MAITRRSFLKGVATTSAASIIGPSLLTSVSAQA) form a signal peptide, tat-type signal. Residue serine 179 participates in Mo-bis(molybdopterin guanine dinucleotide) binding.

It belongs to the prokaryotic molybdopterin-containing oxidoreductase family. Mo-bis(molybdopterin guanine dinucleotide) serves as cofactor. Predicted to be exported by the Tat system. The position of the signal peptide cleavage has not been experimentally proven.

The protein resides in the periplasm. It catalyses the reaction trimethylamine + 2 Fe(III)-[cytochrome c] + H2O = trimethylamine N-oxide + 2 Fe(II)-[cytochrome c] + 3 H(+). In terms of biological role, reduces trimethylamine-N-oxide (TMAO) into trimethylamine; an anaerobic reaction coupled to energy-yielding reactions. The sequence is that of Trimethylamine-N-oxide reductase (torA) from Vibrio cholerae serotype O1 (strain ATCC 39315 / El Tor Inaba N16961).